A 177-amino-acid polypeptide reads, in one-letter code: Large ribosomal subunit protein uL10 (177 aa).

This sequence belongs to the universal ribosomal protein uL10 family. Part of the ribosomal stalk of the 50S ribosomal subunit. The N-terminus interacts with L11 and the large rRNA to form the base of the stalk. The C-terminus forms an elongated spine to which L12 dimers bind in a sequential fashion forming a multimeric L10(L12)X complex.

In terms of biological role, forms part of the ribosomal stalk, playing a central role in the interaction of the ribosome with GTP-bound translation factors. In Variovorax paradoxus (strain S110), this protein is Large ribosomal subunit protein uL10.